The sequence spans 356 residues: Cyanide hydratase (356 aa).

Residues 6–285 form the CN hydrolase domain; sequence YKAAAVTSEP…DGLLFVDIDL (280 aa). Catalysis depends on E46, which acts as the Proton acceptor. Residue K128 is part of the active site. C163 (nucleophile) is an active-site residue.

This sequence belongs to the carbon-nitrogen hydrolase superfamily. Nitrilase family. In terms of assembly, oligomer of dimers, forming left-handed helical fibers.

It catalyses the reaction formamide = hydrogen cyanide + H2O. Functionally, catalyzes the hydration of cyanide to formamide. Degradation of cyanide may be important for plant pathogenic fungi in infection of cyanogenic plants. The sequence is that of Cyanide hydratase from Leptosphaeria maculans (Blackleg fungus).